A 319-amino-acid chain; its full sequence is D-galacturonate reductase (319 aa).

Tyr-58 acts as the Proton donor in catalysis. A substrate-binding site is contributed by His-121. 216 to 275 (SPLGAARTKWGDDRVLGSDIIEEIAQAKGKSTAQISLRWVYEQGVSIVTKSYNKERMRQN) provides a ligand contact to NADP(+).

It belongs to the aldo/keto reductase family. In terms of tissue distribution, expressed specifically in the receptacle tissue of the fruit.

The catalysed reaction is L-galactonate + NADP(+) = aldehydo-D-galacturonate + NADPH + H(+). It participates in cofactor biosynthesis; L-ascorbate biosynthesis. In terms of biological role, involved in ascorbic acid (vitamin C) biosynthesis. This is D-galacturonate reductase (GALUR) from Fragaria ananassa (Strawberry).